We begin with the raw amino-acid sequence, 294 residues long: N-acetylmuramic acid 6-phosphate etherase (294 aa).

The region spanning 54 to 217 (VIQSFEEEGR…STASMIGVGK (164 aa)) is the SIS domain. Glu-82 (proton donor) is an active-site residue. The active site involves Glu-113.

This sequence belongs to the GCKR-like family. MurNAc-6-P etherase subfamily. In terms of assembly, homodimer.

It catalyses the reaction N-acetyl-D-muramate 6-phosphate + H2O = N-acetyl-D-glucosamine 6-phosphate + (R)-lactate. It participates in amino-sugar metabolism; N-acetylmuramate degradation. Its function is as follows. Specifically catalyzes the cleavage of the D-lactyl ether substituent of MurNAc 6-phosphate, producing GlcNAc 6-phosphate and D-lactate. This is N-acetylmuramic acid 6-phosphate etherase from Bacillus cereus (strain AH820).